A 63-amino-acid chain; its full sequence is Large ribosomal subunit protein bL28 (63 aa).

The protein belongs to the bacterial ribosomal protein bL28 family.

The polypeptide is Large ribosomal subunit protein bL28 (Desulfatibacillum aliphaticivorans).